The sequence spans 301 residues: MSKTLTHLQQLEAESIHIIREVVAEFANPVMLYSIGKDSAVMLHLARKAFYPAPPPFPLLHVDTTWKFREMIQFRDRMAAECGLDLIVHVNEEGVKNGISPFTHGSALYTDVMKTEGLKQALDKYKFDAAFGGARRDEEKSRAKERIFSFRSANHRWDPKNQRPELWNLYNTRIKPGESIRVFPLSNWTELDVWQYIHLENIPIVPLYYAAVRPVVERDGMLIMVDDDRLELKPGETVQHKSVRFRTLGCYPLTGAVESTADTLPQIIQEMLLTRTSERQGRLIDHDQAGSMEKKKQEGYF.

This sequence belongs to the PAPS reductase family. CysD subfamily. As to quaternary structure, heterodimer composed of CysD, the smaller subunit, and CysN.

The enzyme catalyses sulfate + ATP + H(+) = adenosine 5'-phosphosulfate + diphosphate. Its pathway is sulfur metabolism; hydrogen sulfide biosynthesis; sulfite from sulfate: step 1/3. Functionally, with CysN forms the ATP sulfurylase (ATPS) that catalyzes the adenylation of sulfate producing adenosine 5'-phosphosulfate (APS) and diphosphate, the first enzymatic step in sulfur assimilation pathway. APS synthesis involves the formation of a high-energy phosphoric-sulfuric acid anhydride bond driven by GTP hydrolysis by CysN coupled to ATP hydrolysis by CysD. This Geotalea daltonii (strain DSM 22248 / JCM 15807 / FRC-32) (Geobacter daltonii) protein is Sulfate adenylyltransferase subunit 2.